The primary structure comprises 298 residues: Sulfofructose kinase (298 aa).

6-deoxy-6-sulfo-D-fructose is bound by residues Asp-13, Lys-27, Gly-39, Ser-95, and Arg-138. Thr-212, Gly-214, Gly-217, and Gly-243 together coordinate ATP. Asp-244 lines the 6-deoxy-6-sulfo-D-fructose pocket.

The protein belongs to the carbohydrate kinase PfkB family. As to quaternary structure, homodimer.

It carries out the reaction 6-deoxy-6-sulfo-D-fructose + ATP = 6-deoxy-6-sulfo-D-fructose 1-phosphate + ADP + H(+). Its activity is regulated as follows. Strongly inhibited by ADP. Activated by sulfoquinovose (SQ), sulfolactaldehyde (SLA) and dihydroxyacetone phosphate (DHAP) (through effects on KM) and by fructose 6-phosphate (F6P), fructose bisphosphate (FBP), phosphoenolpyruvate (PEP) and citrate (through effects on kcat/KM). In terms of biological role, phosphorylates 6-deoxy-6-sulfo-D-fructose (SF) to 6-deoxy-6-sulfo-D-fructose 1-phosphate (SFP). Cannot phosphorylate fructose 6-phosphate. This chain is Sulfofructose kinase (yihV), found in Escherichia coli (strain K12).